A 339-amino-acid polypeptide reads, in one-letter code: MIRIRNRWFRWLAIALASLVASIGIATVGFAATGVTPDQVLSAIEGTFGVNVGQRRNHIKGTCAVGNFVATTEAKTYSRSPLFSGQSIPVVARFSLAGGNPKAPDTAKNPRGLGLQFQLPNNRFLNMALLNTPVFGVASPEGFYENILAIRPDPTTGKPDPEKVKAFREKYPENKAQAAFLASNNPPTSYANTSYFGLHAFKFINQTNQTRLVRWQFVPQDGEKRLTDAELQAAPANFLEQKLIERTQDSPVKWDFWITLGQPGDAEDNPTIAWPSDRQQVKVGTLTLTAASPQPGAACEGINYDPLVLSDGIEPTNDPVLQFRSGVYALSYSKRTRGL.

The first 31 residues, 1-31 (MIRIRNRWFRWLAIALASLVASIGIATVGFA), serve as a signal peptide directing secretion. Histidine 58 is a catalytic residue. Tyrosine 328 lines the heme pocket.

The protein belongs to the catalase family. The cofactor is heme.

The protein localises to the periplasm. In terms of biological role, has an organic peroxide-dependent peroxidase activity. The chain is Catalase-related peroxidase (srpA) from Synechococcus elongatus (strain ATCC 33912 / PCC 7942 / FACHB-805) (Anacystis nidulans R2).